Consider the following 461-residue polypeptide: Steroidogenic factor 1 (461 aa).

Residues 10–85 (DELCPVCGDK…VGMRLEAVRA (76 aa)) constitute a DNA-binding region (nuclear receptor). The NR C4-type zinc-finger motif lies at 13–33 (CPVCGDKVSGYHYGLLTCESC). Residues Lys34, Lys38, and Lys72 each carry the N6-acetyllysine modification. The segment at 49 to 73 (CTESQSCKIDKTQRKRCPFCRFQKC) adopts an NR C4-type zinc-finger fold. Lys119 participates in a covalent cross-link: Glycyl lysine isopeptide (Lys-Gly) (interchain with G-Cter in SUMO). The interval 119-150 (KLETGPPMGVAPPPPPPPDYMLPPGLHAPEPK) is disordered. Positions 127-139 (GVAPPPPPPPDYM) are enriched in pro residues. Lys194 participates in a covalent cross-link: Glycyl lysine isopeptide (Lys-Gly) (interchain with G-Cter in SUMO). Ser203 is modified (phosphoserine; by CDK7). The 238-residue stretch at 222-459 (GVPELIVQLL…NLLIEMLQAK (238 aa)) folds into the NR LBD domain. Residues 230 to 461 (LLQLEPDEDQ…LIEMLQAKQT (232 aa)) form an important for dimerization region. Gly341, Tyr436, and Lys440 together coordinate a 1,2-diacyl-sn-glycero-3-phosphocholine.

This sequence belongs to the nuclear hormone receptor family. NR5 subfamily. Binds DNA as a monomer. Part of a complex consisting of SFPQ, NONO and NR5A1. Interacts with NR0B2, NCOA2 and PPARGC1A. Interacts with DGKQ and CDK7. Binds to and activated by HIPK3. Post-translationally, acetylation stimulates the transcriptional activity. Sumoylation reduces CDK7-mediated phosphorylation on Ser-203. In terms of processing, phosphorylated on Ser-203 by CDK7. This phosphorylation promotes transcriptional activity.

It is found in the nucleus. Its function is as follows. Transcriptional activator. Seems to be essential for sexual differentiation and formation of the primary steroidogenic tissues. Binds to the Ad4 site found in the promoter region of steroidogenic P450 genes such as CYP11A, CYP11B and CYP21B. Also regulates the AMH/Muellerian inhibiting substance gene as well as the AHCH and STAR genes. 5'-YCAAGGYC-3' and 5'-RRAGGTCA-3' are the consensus sequences for the recognition by NR5A1. The SFPQ-NONO-NR5A1 complex binds to the CYP17 promoter and regulates basal and cAMP-dependent transcriptional activity. Binds phosphatidylcholine and phospholipids with a phosphatidylinositol (PI) headgroup, in particular PI(3,4)P2 and PI(3,4,5)P3. Activated by the phosphorylation of NR5A1 by HIPK3 leading to increased steroidogenic gene expression upon cAMP signaling pathway stimulation. In Sus scrofa (Pig), this protein is Steroidogenic factor 1 (NR5A1).